The following is a 265-amino-acid chain: Tryptophan synthase alpha chain (265 aa).

Catalysis depends on proton acceptor residues E49 and D60.

The protein belongs to the TrpA family. As to quaternary structure, tetramer of two alpha and two beta chains.

The enzyme catalyses (1S,2R)-1-C-(indol-3-yl)glycerol 3-phosphate + L-serine = D-glyceraldehyde 3-phosphate + L-tryptophan + H2O. It functions in the pathway amino-acid biosynthesis; L-tryptophan biosynthesis; L-tryptophan from chorismate: step 5/5. Its function is as follows. The alpha subunit is responsible for the aldol cleavage of indoleglycerol phosphate to indole and glyceraldehyde 3-phosphate. This chain is Tryptophan synthase alpha chain, found in Desulfosudis oleivorans (strain DSM 6200 / JCM 39069 / Hxd3) (Desulfococcus oleovorans).